The primary structure comprises 397 residues: Succinate--CoA ligase [ADP-forming] subunit beta (397 aa).

The ATP-grasp domain occupies 9–254 (KALLKSFGAP…KSEEDEKEIQ (246 aa)). ATP contacts are provided by residues K46, 53–55 (GRG), E109, A112, and E117. Residues N209 and D223 each coordinate Mg(2+). Substrate is bound by residues N274 and 331-333 (GIM).

The protein belongs to the succinate/malate CoA ligase beta subunit family. Heterotetramer of two alpha and two beta subunits. The cofactor is Mg(2+).

It carries out the reaction succinate + ATP + CoA = succinyl-CoA + ADP + phosphate. The enzyme catalyses GTP + succinate + CoA = succinyl-CoA + GDP + phosphate. It functions in the pathway carbohydrate metabolism; tricarboxylic acid cycle; succinate from succinyl-CoA (ligase route): step 1/1. Functionally, succinyl-CoA synthetase functions in the citric acid cycle (TCA), coupling the hydrolysis of succinyl-CoA to the synthesis of either ATP or GTP and thus represents the only step of substrate-level phosphorylation in the TCA. The beta subunit provides nucleotide specificity of the enzyme and binds the substrate succinate, while the binding sites for coenzyme A and phosphate are found in the alpha subunit. This is Succinate--CoA ligase [ADP-forming] subunit beta from Rhizobium rhizogenes (strain K84 / ATCC BAA-868) (Agrobacterium radiobacter).